A 352-amino-acid chain; its full sequence is Organic solute transporter subunit alpha (352 aa).

The Extracellular segment spans residues 1-45; the sequence is MDVAHPEEVTRFSPDILMEKFNVSEACFLPPPISIQLILQLTWLD. Asn-22 carries N-linked (GlcNAc...) asparagine glycosylation. Residues 46 to 66 form a helical membrane-spanning segment; sequence IGVFAALTAMTVLTIAIYLEI. Topologically, residues 67 to 82 are cytoplasmic; that stretch reads VCYLMDKVKCPIKRKT. Residues 83–103 form a helical membrane-spanning segment; that stretch reads LMWNSAAPTVIAITSCLGLWV. The Extracellular portion of the chain corresponds to 104-108; that stretch reads PRAIM. Residues 109-129 form a helical membrane-spanning segment; it reads FVDMAAAMYFGVGFYLMLLII. Residues 130–173 lie on the Cytoplasmic side of the membrane; the sequence is VQGYGGEEAMLQHLATHTIRISTGPCCCCCPCLPHIHLTRQKYK. The helical transmembrane segment at 174–194 threads the bilayer; that stretch reads IFVLGAFQVAFLRPALFLLGV. The Extracellular portion of the chain corresponds to 195 to 210; that stretch reads VLWTNGLYDPDDWSST. Residues 211–231 traverse the membrane as a helical segment; sequence SIFLWLNLFLGVSTILGLWPV. Residues 232–250 lie on the Cytoplasmic side of the membrane; the sequence is NVLFRHSKVLMADQKLTCK. The chain crosses the membrane as a helical span at residues 251 to 271; it reads FALFQAILILSSLQNSIIGTL. The Extracellular segment spans residues 272 to 294; the sequence is AGAGHIGCAPPYSARTRGQQMNN. The helical transmembrane segment at 295-312 threads the bilayer; sequence QLLIIEMFFVGILTRISY. Residues 313-352 lie on the Cytoplasmic side of the membrane; sequence RKRDDRPGHRHVGEVQQIVRECDQPAIADQQADHSSISHI.

Belongs to the OST-alpha family. Interacts with slc51b. The Ost-alpha/Ost-beta complex is a heterodimer composed of alpha (slc51a) and beta (slc51b) subunit. As to expression, expressed in liver.

The protein resides in the cell membrane. It is found in the endoplasmic reticulum membrane. The catalysed reaction is taurocholate(out) = taurocholate(in). It catalyses the reaction prostaglandin E2(out) = prostaglandin E2(in). The enzyme catalyses estrone 3-sulfate(out) = estrone 3-sulfate(in). It carries out the reaction dehydroepiandrosterone 3-sulfate(out) = dehydroepiandrosterone 3-sulfate(in). The catalysed reaction is tauroursodeoxycholate(out) = tauroursodeoxycholate(in). It catalyses the reaction glycoursodeoxycholate(out) = glycoursodeoxycholate(in). The enzyme catalyses glycocholate(out) = glycocholate(in). It carries out the reaction taurochenodeoxycholate(out) = taurochenodeoxycholate(in). The catalysed reaction is glycochenodeoxycholate(out) = glycochenodeoxycholate(in). It catalyses the reaction taurodeoxycholate(out) = taurodeoxycholate(in). The enzyme catalyses glycodeoxycholate(out) = glycodeoxycholate(in). Its function is as follows. Essential component of the Ost-alpha/Ost-beta complex, a heterodimer that acts as the intestinal basolateral transporter responsible for the translocation of bile acids (such as taurocholate), steroids (such as estrone sulfate), and eicosanoids (such as prostaglandin E2). This is Organic solute transporter subunit alpha (slc51a) from Leucoraja erinaceus (Little skate).